Here is a 397-residue protein sequence, read N- to C-terminus: Fractalkine (397 aa).

The N-terminal stretch at 1–24 (MAPISLSWLLRLATFCHLTVLLAG) is a signal peptide. The interval 25 to 100 (QHHGVTKCNI…RQAAALTRNG (76 aa)) is chemokine and involved in interaction with ITGAV:ITGB3 and ITGA4:ITGB1. Over 25–341 (QHHGVTKCNI…PDAQAATRRQ (317 aa)) the chain is Extracellular. 2 disulfides stabilise this stretch: cysteine 32/cysteine 58 and cysteine 36/cysteine 74. An N-linked (GlcNAc...) asparagine glycan is attached at asparagine 33. The tract at residues 101 to 341 (GTFEKQIGEV…PDAQAATRRQ (241 aa)) is mucin-like stalk. 2 disordered regions span residues 128–265 (EPEA…REEM) and 289–309 (VPVSSEGTPSREPVASGSWTP). Polar residues predominate over residues 133–147 (GESSSLEPTPSSQEA). Threonine 183 carries an O-linked (GalNAc...) threonine glycan. Residues 193-202 (TAATWQSSAP) show a composition bias toward polar residues. Residues 219-243 (PSTQDPSTQASTASSPAPEENAPSE) are compositionally biased toward low complexity. Residue serine 253 is glycosylated (O-linked (GalNAc...) serine). Threonine 329 is a glycosylation site (O-linked (GalNAc...) threonine). A helical membrane pass occupies residues 342 to 362 (AVGLLAFLGLLFCLGVAMFTY). The Cytoplasmic portion of the chain corresponds to 363-397 (QSLQGCPRKMAGEMAEGLRYIPRSCGSNSYVLVPV).

This sequence belongs to the intercrine delta family. In terms of assembly, monomer. Forms a ternary complex with CX3CR1 and ITGAV:ITGB3 or ITGA4:ITGB1. (Microbial infection) Interacts with pox virus crmD; this inhibits cell migration mediated by CX3CL1. As to quaternary structure, (Microbial infection) Interacts (via N-terminus) with human cytomegalovirus (HHV-5) US28. In terms of assembly, (Microbial infection) Interacts with P.falciparum (strain 3D7) CBP1 and CBP2 (via their extracellular domains); the interaction mediates the adhesion of infected erythrocytes with endothelial cells. In terms of processing, a soluble short 95 kDa form may be released by proteolytic cleavage from the long membrane-anchored form. Post-translationally, O-glycosylated with core 1 or possibly core 8 glycans. Expressed in the seminal plasma, endometrial fluid and follicular fluid (at protein level). Small intestine, colon, testis, prostate, heart, brain, lung, skeletal muscle, kidney and pancreas. Most abundant in the brain and heart.

It is found in the cell membrane. Its subcellular location is the secreted. Its function is as follows. Chemokine that acts as a ligand for both CX3CR1 and integrins ITGAV:ITGB3 and ITGA4:ITGB1. The CX3CR1-CX3CL1 signaling exerts distinct functions in different tissue compartments, such as immune response, inflammation, cell adhesion and chemotaxis. Regulates leukocyte adhesion and migration processes at the endothelium. Can activate integrins in both a CX3CR1-dependent and CX3CR1-independent manner. In the presence of CX3CR1, activates integrins by binding to the classical ligand-binding site (site 1) in integrins. In the absence of CX3CR1, binds to a second site (site 2) in integrins which is distinct from site 1 and enhances the binding of other integrin ligands to site 1. The soluble form is chemotactic for T-cells and monocytes, but not for neutrophils. In terms of biological role, the membrane-bound form promotes adhesion of those leukocytes to endothelial cells. Functionally, (Microbial infection) Mediates the cytoadherence of erythrocytes infected with parasite P.falciparum (strain 3D7) with endothelial cells by interacting with P.falciparum CBP1 and CBP2 expressed at the surface of erythrocytes. The adhesion prevents the elimination of infected erythrocytes by the spleen. The polypeptide is Fractalkine (Homo sapiens (Human)).